The following is a 156-amino-acid chain: RING finger protein 224 (156 aa).

The RING-type zinc-finger motif lies at 23-70; that stretch reads CIICYSAYDLSVHLPRRLYCGHTFCQACMQRLDMPAHEQHWIPCPQCR.

This Mus musculus (Mouse) protein is RING finger protein 224 (Rnf224).